The following is a 502-amino-acid chain: UPF0371 protein CLK_3516 (502 aa).

Belongs to the UPF0371 family.

In Clostridium botulinum (strain Loch Maree / Type A3), this protein is UPF0371 protein CLK_3516.